The chain runs to 146 residues: UPF0260 protein Sbal_1871 (146 aa).

The protein belongs to the UPF0260 family.

The chain is UPF0260 protein Sbal_1871 from Shewanella baltica (strain OS155 / ATCC BAA-1091).